Reading from the N-terminus, the 101-residue chain is Large ribosomal subunit protein bL28 (101 aa).

Belongs to the bacterial ribosomal protein bL28 family.

This chain is Large ribosomal subunit protein bL28, found in Rhodopseudomonas palustris (strain BisA53).